The following is a 650-amino-acid chain: 1-deoxy-D-xylulose-5-phosphate synthase (650 aa).

Residues H87 and 128-130 (GHS) contribute to the thiamine diphosphate site. D159 is a binding site for Mg(2+). Thiamine diphosphate-binding positions include 160 to 161 (GS), N188, Y299, and E383. N188 serves as a coordination point for Mg(2+).

It belongs to the transketolase family. DXPS subfamily. As to quaternary structure, homodimer. Requires Mg(2+) as cofactor. Thiamine diphosphate is required as a cofactor.

It catalyses the reaction D-glyceraldehyde 3-phosphate + pyruvate + H(+) = 1-deoxy-D-xylulose 5-phosphate + CO2. It participates in metabolic intermediate biosynthesis; 1-deoxy-D-xylulose 5-phosphate biosynthesis; 1-deoxy-D-xylulose 5-phosphate from D-glyceraldehyde 3-phosphate and pyruvate: step 1/1. Its function is as follows. Catalyzes the acyloin condensation reaction between C atoms 2 and 3 of pyruvate and glyceraldehyde 3-phosphate to yield 1-deoxy-D-xylulose-5-phosphate (DXP). This is 1-deoxy-D-xylulose-5-phosphate synthase from Syntrophus aciditrophicus (strain SB).